Consider the following 60-residue polypeptide: Large ribosomal subunit protein bL32 (60 aa).

The disordered stretch occupies residues 1–23; that stretch reads MAVPKRKKSKSRRNMHRSHHAIK.

Belongs to the bacterial ribosomal protein bL32 family.

This is Large ribosomal subunit protein bL32 from Wolbachia pipientis subsp. Culex pipiens (strain wPip).